The primary structure comprises 536 residues: Lysosomal acid glucosylceramidase (536 aa).

An N-terminal signal peptide occupies residues 1–39 (MEFSSPSREECPKPSGRVNIMAGSLTGLLLLQAVSWASG). Disulfide bonds link C43–C55 and C57–C62. 3 N-linked (GlcNAc...) asparagine glycosylation sites follow: N58, N98, and N185. The active-site Proton donor is the E274. A glycan (N-linked (GlcNAc...) asparagine) is linked at N309. Catalysis depends on E379, which acts as the Nucleophile. N-linked (GlcNAc...) asparagine glycosylation occurs at N501.

It belongs to the glycosyl hydrolase 30 family. Interacts with saposin-C. Interacts with SCARB2. Interacts with TCP1. Interacts with GRN; this interaction prevents aggregation of GBA1-SCARB2 complex via interaction with HSPA1A upon stress.

It localises to the lysosome membrane. It catalyses the reaction a beta-D-glucosyl-(1&lt;-&gt;1')-N-acylsphing-4-enine + H2O = an N-acylsphing-4-enine + D-glucose. The catalysed reaction is a beta-D-galactosyl-(1&lt;-&gt;1')-N-acylsphing-4-enine + H2O = an N-acylsphing-4-enine + D-galactose. The enzyme catalyses cholesteryl 3-beta-D-glucoside + H2O = cholesterol + D-glucose. It carries out the reaction a beta-D-glucosyl-(1&lt;-&gt;1')-N-acylsphing-4-enine + cholesterol = cholesteryl 3-beta-D-glucoside + an N-acylsphing-4-enine. It catalyses the reaction beta-D-glucosyl-N-(9Z-octadecenoyl)-sphing-4E-enine + cholesterol = N-(9Z-octadecenoyl)-sphing-4-enine + cholesteryl 3-beta-D-glucoside. The catalysed reaction is beta-D-glucosyl-N-octanoylsphing-4E-enine + cholesterol = N-octanoylsphing-4-enine + cholesteryl 3-beta-D-glucoside. The enzyme catalyses beta-D-glucosyl-N-dodecanoylsphing-4-enine + cholesterol = N-dodecanoylsphing-4-enine + cholesteryl 3-beta-D-glucoside. It carries out the reaction beta-D-glucosyl-(1&lt;-&gt;1)-N-octadecanoylsphing-4-enine + cholesterol = N-octadecanoylsphing-4-enine + cholesteryl 3-beta-D-glucoside. It catalyses the reaction beta-D-glucosyl-(1&lt;-&gt;1')-N-(15Z-tetracosenoyl)-sphing-4-enine + cholesterol = N-(15Z-tetracosenoyl)-sphing-4-enine + cholesteryl 3-beta-D-glucoside. The catalysed reaction is a beta-D-galactosyl-(1&lt;-&gt;1')-N-acylsphing-4-enine + cholesterol = cholesteryl 3-beta-D-galactoside + an N-acylsphing-4-enine. The enzyme catalyses 1-(beta-D-galactosyl)-N-dodecanoylsphing-4-enine + cholesterol = cholesteryl 3-beta-D-galactoside + N-dodecanoylsphing-4-enine. It carries out the reaction a beta-D-xylosyl-(1&lt;-&gt;1')-N-acylsphing-4-enine + cholesterol = cholesteryl 3-beta-D-xyloside + an N-acylsphing-4-enine. It catalyses the reaction beta-D-xylosyl-(1&lt;-&gt;1')-N-(9Z-octadecenoyl)-sphing-4-enine + cholesterol = cholesteryl 3-beta-D-xyloside + N-(9Z-octadecenoyl)-sphing-4-enine. It functions in the pathway steroid metabolism; cholesterol metabolism. Its pathway is sphingolipid metabolism. Glucosylceramidase that catalyzes, within the lysosomal compartment, the hydrolysis of glucosylceramides/GlcCers (such as beta-D-glucosyl-(1&lt;-&gt;1')-N-acylsphing-4-enine) into free ceramides (such as N-acylsphing-4-enine) and glucose. Plays a central role in the degradation of complex lipids and the turnover of cellular membranes. Through the production of ceramides, participates in the PKC-activated salvage pathway of ceramide formation. Catalyzes the glucosylation of cholesterol, through a transglucosylation reaction where glucose is transferred from GlcCer to cholesterol. GlcCer containing mono-unsaturated fatty acids (such as beta-D-glucosyl-N-(9Z-octadecenoyl)-sphing-4-enine) are preferred as glucose donors for cholesterol glucosylation when compared with GlcCer containing same chain length of saturated fatty acids (such as beta-D-glucosyl-N-octadecanoyl-sphing-4-enine). Under specific conditions, may alternatively catalyze the reverse reaction, transferring glucose from cholesteryl 3-beta-D-glucoside to ceramide. Can also hydrolyze cholesteryl 3-beta-D-glucoside producing glucose and cholesterol. Catalyzes the hydrolysis of galactosylceramides/GalCers (such as beta-D-galactosyl-(1&lt;-&gt;1')-N-acylsphing-4-enine), as well as the transfer of galactose between GalCers and cholesterol in vitro, but with lower activity than with GlcCers. Contrary to GlcCer and GalCer, xylosylceramide/XylCer (such as beta-D-xyosyl-(1&lt;-&gt;1')-N-acylsphing-4-enine) is not a good substrate for hydrolysis, however it is a good xylose donor for transxylosylation activity to form cholesteryl 3-beta-D-xyloside. This Pongo abelii (Sumatran orangutan) protein is Lysosomal acid glucosylceramidase (GBA1).